The sequence spans 420 residues: Serine hydroxymethyltransferase (420 aa).

(6S)-5,6,7,8-tetrahydrofolate is bound by residues L121 and 125 to 127 (GHL). N6-(pyridoxal phosphate)lysine is present on K230.

It belongs to the SHMT family. As to quaternary structure, homodimer. The cofactor is pyridoxal 5'-phosphate.

Its subcellular location is the cytoplasm. It catalyses the reaction (6R)-5,10-methylene-5,6,7,8-tetrahydrofolate + glycine + H2O = (6S)-5,6,7,8-tetrahydrofolate + L-serine. It participates in one-carbon metabolism; tetrahydrofolate interconversion. Its pathway is amino-acid biosynthesis; glycine biosynthesis; glycine from L-serine: step 1/1. Its function is as follows. Catalyzes the reversible interconversion of serine and glycine with tetrahydrofolate (THF) serving as the one-carbon carrier. This reaction serves as the major source of one-carbon groups required for the biosynthesis of purines, thymidylate, methionine, and other important biomolecules. Also exhibits THF-independent aldolase activity toward beta-hydroxyamino acids, producing glycine and aldehydes, via a retro-aldol mechanism. This is Serine hydroxymethyltransferase from Streptomyces avermitilis (strain ATCC 31267 / DSM 46492 / JCM 5070 / NBRC 14893 / NCIMB 12804 / NRRL 8165 / MA-4680).